The primary structure comprises 531 residues: Peptide chain release factor 3 (531 aa).

In terms of domain architecture, tr-type G spans 10–278; the sequence is RRRRTFAIIS…SLIEWAPAPK (269 aa). GTP-binding positions include 19–26, 87–91, and 141–144; these read SHPDAGKT, DTPGH, and NKYD.

This sequence belongs to the TRAFAC class translation factor GTPase superfamily. Classic translation factor GTPase family. PrfC subfamily.

The protein localises to the cytoplasm. In terms of biological role, increases the formation of ribosomal termination complexes and stimulates activities of RF-1 and RF-2. It binds guanine nucleotides and has strong preference for UGA stop codons. It may interact directly with the ribosome. The stimulation of RF-1 and RF-2 is significantly reduced by GTP and GDP, but not by GMP. This is Peptide chain release factor 3 from Neisseria meningitidis serogroup A / serotype 4A (strain DSM 15465 / Z2491).